The following is a 375-amino-acid chain: CMP-N-acetylneuraminate-beta-1,4-galactoside alpha-2,3-sialyltransferase (375 aa).

Over 1-8 the chain is Cytoplasmic; it reads MGLLVFVR. Residues 9-28 traverse the membrane as a helical; Signal-anchor for type II membrane protein segment; that stretch reads NLLLALCLFLVLGFLYYSAW. Residues 29 to 375 are Lumenal-facing; it reads KLHLLQWEED…RVITDLSSGI (347 aa). 2 N-linked (GlcNAc...) asparagine glycosylation sites follow: asparagine 80 and asparagine 171. An intrachain disulfide couples cysteine 160 to cysteine 314.

Belongs to the glycosyltransferase 29 family. In terms of processing, the soluble form derives from the membrane form by proteolytic processing. In terms of tissue distribution, highly expressed in adult skeletal muscle and in all fetal tissues examined and to a much lesser extent in placenta, lung and liver.

It localises to the golgi apparatus. The protein resides in the golgi stack membrane. It is found in the secreted. The enzyme catalyses a beta-D-galactosyl-(1-&gt;4)-N-acetyl-beta-D-glucosaminyl derivative + CMP-N-acetyl-beta-neuraminate = an N-acetyl-alpha-neuraminyl-(2-&gt;3)-beta-D-galactosyl-(1-&gt;4)-N-acetyl-beta-D-glucosaminyl derivative + CMP + H(+). It participates in protein modification; protein glycosylation. Catalyzes the formation of the NeuAc-alpha-2,3-Gal-beta-1,4-GlcNAc-, NeuAc-alpha-2,3-Gal-beta-1,3-GlcNAc- and NeuAc-alpha-2,3-Gal-beta-1,3-GalNAc- sequences found in terminal carbohydrate groups of glycoproteins and glycolipids. The highest activity is toward Gal-beta-1,3-GlcNAc and the lowest toward Gal-beta-1,3-GalNAc. The sequence is that of CMP-N-acetylneuraminate-beta-1,4-galactoside alpha-2,3-sialyltransferase (ST3GAL3) from Homo sapiens (Human).